Here is a 114-residue protein sequence, read N- to C-terminus: Ig kappa chain V-I region S107A (114 aa).

Positions 1 to 23 (DIVMTQSPTFLAVTASKKVTISC) are framework-1. Cys23 and Cys94 are disulfide-bonded. Residues 24-40 (TASESLYSSKHKVHYLA) form a complementarity-determining-1 region. The interval 41-55 (WYQKKPEQSPKLLIY) is framework-2. Positions 56 to 62 (GASNRYI) are complementarity-determining-2. The segment at 63–94 (GVPDRFTGSGSGTDFTLTISSVQVEDLTHYYC) is framework-3. The interval 95-103 (AQFYSYPLT) is complementarity-determining-3. The framework-4 stretch occupies residues 104-113 (FGAGTKLELK).

Its function is as follows. Anti-phosphocholine antibody. The polypeptide is Ig kappa chain V-I region S107A (Igkv7-33) (Mus musculus (Mouse)).